Consider the following 134-residue polypeptide: Large ribosomal subunit protein bL20 (134 aa).

The protein belongs to the bacterial ribosomal protein bL20 family.

Functionally, binds directly to 23S ribosomal RNA and is necessary for the in vitro assembly process of the 50S ribosomal subunit. It is not involved in the protein synthesizing functions of that subunit. The protein is Large ribosomal subunit protein bL20 of Brucella abortus (strain S19).